We begin with the raw amino-acid sequence, 308 residues long: ADP-L-glycero-D-manno-heptose-6-epimerase (308 aa).

NADP(+) is bound by residues 10 to 11, 31 to 32, lysine 38, lysine 53, 75 to 79, and asparagine 92; these read MI, DN, and EGACS. The active-site Proton acceptor is the tyrosine 140. An NADP(+)-binding site is contributed by lysine 144. Asparagine 169 lines the substrate pocket. Valine 170 and lysine 178 together coordinate NADP(+). The Proton acceptor role is filled by lysine 178. Substrate is bound by residues serine 180, histidine 187, 201-204, arginine 209, and tyrosine 272; that span reads FEGS.

Belongs to the NAD(P)-dependent epimerase/dehydratase family. HldD subfamily. In terms of assembly, homopentamer. It depends on NADP(+) as a cofactor.

It catalyses the reaction ADP-D-glycero-beta-D-manno-heptose = ADP-L-glycero-beta-D-manno-heptose. It functions in the pathway nucleotide-sugar biosynthesis; ADP-L-glycero-beta-D-manno-heptose biosynthesis; ADP-L-glycero-beta-D-manno-heptose from D-glycero-beta-D-manno-heptose 7-phosphate: step 4/4. Catalyzes the interconversion between ADP-D-glycero-beta-D-manno-heptose and ADP-L-glycero-beta-D-manno-heptose via an epimerization at carbon 6 of the heptose. The protein is ADP-L-glycero-D-manno-heptose-6-epimerase of Actinobacillus pleuropneumoniae serotype 7 (strain AP76).